The chain runs to 376 residues: Chaperone protein DnaJ (376 aa).

The J domain occupies 5 to 69; the sequence is DYYEVLGISK…QKRAQYDQYG (65 aa). The CR-type zinc-finger motif lies at 133-215; that stretch reads GKDAEIEIPR…CHGKGRVTKT (83 aa). Residues Cys-146, Cys-149, Cys-163, Cys-166, Cys-189, Cys-192, Cys-203, and Cys-206 each coordinate Zn(2+). CXXCXGXG motif repeat units follow at residues 146–153, 163–170, 189–196, and 203–210; these read CDTCHGSG, CSHCGGKG, CQYCNGTG, and CPTCHGKG.

The protein belongs to the DnaJ family. Homodimer. The cofactor is Zn(2+).

The protein localises to the cytoplasm. Its function is as follows. Participates actively in the response to hyperosmotic and heat shock by preventing the aggregation of stress-denatured proteins and by disaggregating proteins, also in an autonomous, DnaK-independent fashion. Unfolded proteins bind initially to DnaJ; upon interaction with the DnaJ-bound protein, DnaK hydrolyzes its bound ATP, resulting in the formation of a stable complex. GrpE releases ADP from DnaK; ATP binding to DnaK triggers the release of the substrate protein, thus completing the reaction cycle. Several rounds of ATP-dependent interactions between DnaJ, DnaK and GrpE are required for fully efficient folding. Also involved, together with DnaK and GrpE, in the DNA replication of plasmids through activation of initiation proteins. This is Chaperone protein DnaJ from Listeria monocytogenes serotype 4a (strain HCC23).